A 166-amino-acid chain; its full sequence is Myosin regulatory light chain 2, ventricular/cardiac muscle isoform (166 aa).

The residue at position 2 (Ser-2) is a N,N,N-trimethylserine. Residues Ser-14, Ser-15, and Ser-19 each carry the phosphoserine modification. 3 EF-hand domains span residues 24-59, 94-129, and 130-165; these read TQIQ…LGRV, DPEE…QAER, and FSKE…GEEK. The Ca(2+) site is built by Asp-37, Asn-39, Asp-41, and Asp-48. Thr-52 is modified (phosphothreonine).

In terms of assembly, myosin is a hexamer of 2 heavy chains and 4 light chains. Interacts with MYOC. Post-translationally, N-terminus is methylated by METTL11A/NTM1. Phosphorylated by MYLK3 and MYLK2; promotes cardiac muscle contraction and function. Dephosphorylated by PPP1CB complexed to PPP1R12B. The phosphorylated form in adult is expressed as gradients across the heart from endocardium (low phosphorylation) to epicardium (high phosphorylation); regulates cardiac torsion and workload distribution. In terms of tissue distribution, abundantly expressed in both cardiac and slow skeletal muscle (soleus), with no detectable expression in fast skeletal muscle (vastus lateralis) or non-muscle tissue.

The protein localises to the cytoplasm. It is found in the myofibril. Its subcellular location is the sarcomere. The protein resides in the a band. Contractile protein that plays a role in heart development and function. Following phosphorylation, plays a role in cross-bridge cycling kinetics and cardiac muscle contraction by increasing myosin lever arm stiffness and promoting myosin head diffusion; as a consequence of the increase in maximum contraction force and calcium sensitivity of contraction force. These events altogether slow down myosin kinetics and prolong duty cycle resulting in accumulated myosins being cooperatively recruited to actin binding sites to sustain thin filament activation as a means to fine-tune myofilament calcium sensitivity to force. During cardiogenesis plays an early role in cardiac contractility by promoting cardiac myofibril assembly. The sequence is that of Myosin regulatory light chain 2, ventricular/cardiac muscle isoform from Rattus norvegicus (Rat).